Consider the following 318-residue polypeptide: MDCKSEESAQRTDSQAFQEPDGLPEAGGEDGLSESFQLLQVDVEYERPEETSPANSAVWSSKNMQRKQRHWERIVSSKKSKRKQERERRKAKRAEDPGNGTCPQHSKRFLKALTKEKLLEAKHSGPRLCVDLSMTQHMSKKELSRLAGQIRRLYGSNKKASRPFWICLTGFSTASPLYEECLRMNDGFSAYLLDVTEEDCFSLFPLETLVYLTPDSEHSLEDIDQSTVYVIGGLVDESIQKKVTFQKAREYSVKTARLPIQEYMIKRQNEKNYHSEILAINQVFDILSTYFETRNWPEALKKGVSPGKGYVLQNSAEG.

Residues 1 to 10 are compositionally biased toward basic and acidic residues; it reads MDCKSEESAQ. Residues 1–105 are disordered; sequence MDCKSEESAQ…DPGNGTCPQH (105 aa). Residues 52–63 are compositionally biased toward polar residues; that stretch reads SPANSAVWSSKN. The span at 64 to 83 shows a compositional bias: basic residues; sequence MQRKQRHWERIVSSKKSKRK. A coiled-coil region spans residues 72–93; sequence ERIVSSKKSKRKQERERRKAKR. Residues 84–96 show a composition bias toward basic and acidic residues; that stretch reads QERERRKAKRAED. In terms of domain architecture, SAM-dependent MTase TRM10-type spans 114 to 311; the sequence is TKEKLLEAKH…KGVSPGKGYV (198 aa).

Belongs to the class IV-like SAM-binding methyltransferase superfamily. TRM10 family.

It carries out the reaction guanosine(9) in tRNA + S-adenosyl-L-methionine = N(1)-methylguanosine(9) in tRNA + S-adenosyl-L-homocysteine + H(+). Its function is as follows. S-adenosyl-L-methionine-dependent guanine N(1)-methyltransferase that catalyzes the formation of N(1)-methylguanine at position 9 (m1G9) in tRNAs. Probably not able to catalyze formation of N(1)-methyladenine at position 9 (m1A9) in tRNAs. The chain is tRNA methyltransferase 10 homolog B (Trmt10b) from Mus musculus (Mouse).